The sequence spans 1100 residues: SLIT-ROBO Rho GTPase-activating protein 2 (1100 aa).

The F-BAR domain occupies 19-324 (TQVKEIRAQL…AAENLEANSD (306 aa)). Coiled-coil stretches lie at residues 170–201 (YNMDSINAESKLKEAEKQEEKQMSRSVRHEEK) and 363–400 (GELIQRCQQLQSRLSTLNIENEEVKKTMEATLQTIQDM). Positions 181-203 (LKEAEKQEEKQMSRSVRHEEKQT) are enriched in basic and acidic residues. The segment at 181 to 210 (LKEAEKQEEKQMSRSVRHEEKQTPRSPDSL) is disordered. Positions 496–680 (VRKQEAIQII…TIIIHHESIF (185 aa)) constitute a Rho-GAP domain. The region spanning 738–797 (SDPIEAIARFDYSGRTNRELSFKKGASLLLYSRASDDWWEGRHNGTEGLVPHQYIVVQDM) is the SH3 domain. Disordered stretches follow at residues 800–835 (GYAGRGSPKADLEGSHDSVEEKVSTRASASSPTGGH) and 852–938 (EATS…PLDP). Over residues 807-823 (PKADLEGSHDSVEEKVS) the composition is skewed to basic and acidic residues. Over residues 919–932 (RKSTPTGRSKSFSN) the composition is skewed to polar residues. Residues 945–972 (EHSSQDIEATMNTALSELRELERQSNVK) adopt a coiled-coil conformation. The segment at 986-1100 (KSGGTSEPSS…PPPTDKSCPV (115 aa)) is disordered. Polar residues-rich tracts occupy residues 987–997 (SGGTSEPSSPL) and 1008–1049 (SQHP…GSTF). Positions 1067-1081 (SSSAGGSPAMGSPTT) are enriched in low complexity. Positions 1082–1094 (TIPPTPPPPPPPT) are enriched in pro residues.

The protein resides in the cell membrane. The protein localises to the cell projection. Its subcellular location is the dendritic spine. It is found in the postsynaptic density. It localises to the postsynaptic cell membrane. The protein resides in the lamellipodium. The protein localises to the cytoplasmic vesicle. Its subcellular location is the phagosome. It is found in the nucleus. It localises to the cytoplasm. The protein resides in the cytosol. Its function is as follows. Postsynaptic RAC1 GTPase activating protein (GAP) that plays a key role in neuronal morphogenesis and migration mainly during development of the cerebral cortex. Regulates excitatory and inhibitory synapse maturation and density in cortical pyramidal neurons. Mechanistically, acts by binding and deforming membranes, thereby regulating actin dynamics to regulate cell migration and differentiation. The sequence is that of SLIT-ROBO Rho GTPase-activating protein 2 (srgap2) from Danio rerio (Zebrafish).